Consider the following 245-residue polypeptide: Geranylgeranylglyceryl phosphate synthase (245 aa).

The Mg(2+) site is built by Asp22 and Ser51. Sn-glycerol 1-phosphate-binding positions include Tyr169–Gly175, Gly200–Gly201, and Gly222–Thr223.

The protein belongs to the GGGP/HepGP synthase family. Group II subfamily. As to quaternary structure, homotetramer. Homohexamer. Requires Mg(2+) as cofactor.

Its subcellular location is the cytoplasm. It carries out the reaction sn-glycerol 1-phosphate + (2E,6E,10E)-geranylgeranyl diphosphate = sn-3-O-(geranylgeranyl)glycerol 1-phosphate + diphosphate. It functions in the pathway membrane lipid metabolism; glycerophospholipid metabolism. In terms of biological role, prenyltransferase that catalyzes the transfer of the geranylgeranyl moiety of geranylgeranyl diphosphate (GGPP) to the C3 hydroxyl of sn-glycerol-1-phosphate (G1P). This reaction is the first ether-bond-formation step in the biosynthesis of archaeal membrane lipids. This Methanothermobacter thermautotrophicus (strain ATCC 29096 / DSM 1053 / JCM 10044 / NBRC 100330 / Delta H) (Methanobacterium thermoautotrophicum) protein is Geranylgeranylglyceryl phosphate synthase.